Reading from the N-terminus, the 292-residue chain is 33 kDa chaperonin (292 aa).

2 disulfides stabilise this stretch: Cys230-Cys232 and Cys263-Cys266.

This sequence belongs to the HSP33 family. Post-translationally, under oxidizing conditions two disulfide bonds are formed involving the reactive cysteines. Under reducing conditions zinc is bound to the reactive cysteines and the protein is inactive.

The protein resides in the cytoplasm. Its function is as follows. Redox regulated molecular chaperone. Protects both thermally unfolding and oxidatively damaged proteins from irreversible aggregation. Plays an important role in the bacterial defense system toward oxidative stress. The sequence is that of 33 kDa chaperonin from Shigella boydii serotype 4 (strain Sb227).